The primary structure comprises 757 residues: Nitrogen fixation protein FixI (757 aa).

At 1–121 (MSCCASSAAI…GEEEGDDLLK (121 aa)) the chain is on the cytoplasmic side. The HMA domain occupies 37 to 107 (RQTELSVPNA…AIAERGYQTH (71 aa)). A metal cation contacts are provided by cysteine 48 and cysteine 51. Residues 122–143 (QLILAVAVSGFAATNIMLLSVS) traverse the membrane as a helical segment. At 144–158 (VWSGADAATRDLFHW) the chain is on the extracellular side. A helical transmembrane segment spans residues 159 to 178 (ISALIAGPALIYAGRFFYKS). Over 179–185 (AWNAIRH) the chain is Cytoplasmic. Residues 186-206 (GRTNMDVPIALAVSLSYGMSL) form a helical membrane-spanning segment. Residues 207–218 (HETIGHGEHAWF) are Extracellular-facing. The chain crosses the membrane as a helical span at residues 219 to 239 (DASVTLLFFLLIGRTLDHMMR). Residues 240 to 368 (GRARTAISGL…RARYRRIADR (129 aa)) are Cytoplasmic-facing. A helical transmembrane segment spans residues 369–391 (AARYYSPAVHLLALLTFVGWMLV). Over 392–398 (EGDVRHA) the chain is Extracellular. A helical membrane pass occupies residues 399-416 (MLVAVAVLIITCPCALGL). Over 417–688 (AVPVVQVVAA…ETSRHAGQLI (272 aa)) the chain is Cytoplasmic. The active-site 4-aspartylphosphate intermediate is aspartate 454. Positions 634 and 638 each coordinate Mg(2+). Residues 689–708 (RQNFALAIGYNVIAVPIAIL) traverse the membrane as a helical segment. Topologically, residues 709–713 (GYATP) are extracellular. Residues 714–732 (LVAAVAMSSSSLVVVFNAL) traverse the membrane as a helical segment. Residues 733 to 757 (RLKRSLAAGRGATPGTLIHSGAVTS) lie on the Cytoplasmic side of the membrane.

The protein belongs to the cation transport ATPase (P-type) (TC 3.A.3) family. Type IB subfamily.

It localises to the cell membrane. It carries out the reaction ATP + H2O = ADP + phosphate + H(+). In terms of biological role, fixI is a pump of a specific cation involved in symbiotic nitrogen fixation. The four proteins FixG, FixH, FixI, and FixS may participate in a membrane-bound complex coupling the FixI cation pump with a redox process catalyzed by FixG. The protein is Nitrogen fixation protein FixI (fixI) of Rhizobium meliloti (strain 1021) (Ensifer meliloti).